Reading from the N-terminus, the 693-residue chain is Elongation factor G 1 (693 aa).

Positions 4 to 281 (NKLRNIGISA…AVTRFLPSPH (278 aa)) constitute a tr-type G domain. GTP is bound by residues 13–20 (AHIDSGKT), 80–84 (DTPGH), and 134–137 (NKCD).

The protein belongs to the TRAFAC class translation factor GTPase superfamily. Classic translation factor GTPase family. EF-G/EF-2 subfamily.

Its subcellular location is the cytoplasm. Catalyzes the GTP-dependent ribosomal translocation step during translation elongation. During this step, the ribosome changes from the pre-translocational (PRE) to the post-translocational (POST) state as the newly formed A-site-bound peptidyl-tRNA and P-site-bound deacylated tRNA move to the P and E sites, respectively. Catalyzes the coordinated movement of the two tRNA molecules, the mRNA and conformational changes in the ribosome. The chain is Elongation factor G 1 from Borrelia garinii subsp. bavariensis (strain ATCC BAA-2496 / DSM 23469 / PBi) (Borreliella bavariensis).